The chain runs to 98 residues: NADH-ubiquinone oxidoreductase chain 4L (98 aa).

3 helical membrane-spanning segments follow: residues 1 to 21 (MSLV…GLLM), 29 to 49 (SLLC…IMVL), and 61 to 81 (IILL…LVMV).

It belongs to the complex I subunit 4L family. Core subunit of respiratory chain NADH dehydrogenase (Complex I) which is composed of 45 different subunits.

It localises to the mitochondrion inner membrane. The enzyme catalyses a ubiquinone + NADH + 5 H(+)(in) = a ubiquinol + NAD(+) + 4 H(+)(out). Its function is as follows. Core subunit of the mitochondrial membrane respiratory chain NADH dehydrogenase (Complex I) which catalyzes electron transfer from NADH through the respiratory chain, using ubiquinone as an electron acceptor. Part of the enzyme membrane arm which is embedded in the lipid bilayer and involved in proton translocation. This is NADH-ubiquinone oxidoreductase chain 4L (MT-ND4L) from Pseudosoriculus fumidus (Taiwanese brown-toothed shrew).